Consider the following 182-residue polypeptide: Crossover junction endodeoxyribonuclease RuvC (182 aa).

Active-site residues include Asp7, Glu67, and Asp139. Residues Asp7, Glu67, and Asp139 each coordinate Mg(2+).

The protein belongs to the RuvC family. In terms of assembly, homodimer which binds Holliday junction (HJ) DNA. The HJ becomes 2-fold symmetrical on binding to RuvC with unstacked arms; it has a different conformation from HJ DNA in complex with RuvA. In the full resolvosome a probable DNA-RuvA(4)-RuvB(12)-RuvC(2) complex forms which resolves the HJ. It depends on Mg(2+) as a cofactor.

The protein resides in the cytoplasm. The catalysed reaction is Endonucleolytic cleavage at a junction such as a reciprocal single-stranded crossover between two homologous DNA duplexes (Holliday junction).. Its function is as follows. The RuvA-RuvB-RuvC complex processes Holliday junction (HJ) DNA during genetic recombination and DNA repair. Endonuclease that resolves HJ intermediates. Cleaves cruciform DNA by making single-stranded nicks across the HJ at symmetrical positions within the homologous arms, yielding a 5'-phosphate and a 3'-hydroxyl group; requires a central core of homology in the junction. The consensus cleavage sequence is 5'-(A/T)TT(C/G)-3'. Cleavage occurs on the 3'-side of the TT dinucleotide at the point of strand exchange. HJ branch migration catalyzed by RuvA-RuvB allows RuvC to scan DNA until it finds its consensus sequence, where it cleaves and resolves the cruciform DNA. The sequence is that of Crossover junction endodeoxyribonuclease RuvC from Bordetella pertussis (strain Tohama I / ATCC BAA-589 / NCTC 13251).